The chain runs to 438 residues: tRNA modification GTPase MnmE (438 aa).

(6S)-5-formyl-5,6,7,8-tetrahydrofolate-binding residues include arginine 19, glutamate 76, and lysine 115. The TrmE-type G domain maps to 211–363 (GYKVAIIGRP…LSKELESYLN (153 aa)). Residues 221–226 (NVGKSS), 240–246 (SETAGTT), and 265–268 (DTAG) contribute to the GTP site. Mg(2+) contacts are provided by serine 225 and threonine 246. Lysine 438 serves as a coordination point for (6S)-5-formyl-5,6,7,8-tetrahydrofolate.

This sequence belongs to the TRAFAC class TrmE-Era-EngA-EngB-Septin-like GTPase superfamily. TrmE GTPase family. As to quaternary structure, homodimer. Heterotetramer of two MnmE and two MnmG subunits. The cofactor is K(+).

The protein localises to the cytoplasm. Exhibits a very high intrinsic GTPase hydrolysis rate. Involved in the addition of a carboxymethylaminomethyl (cmnm) group at the wobble position (U34) of certain tRNAs, forming tRNA-cmnm(5)s(2)U34. This is tRNA modification GTPase MnmE from Campylobacter fetus subsp. fetus (strain 82-40).